Reading from the N-terminus, the 261-residue chain is Cytochrome c oxidase subunit 3 (261 aa).

Residues 1–15 (MTHQTHAYHMVNPSP) are Mitochondrial matrix-facing. A helical transmembrane segment spans residues 16-34 (WPLTGALSALLMTSGLIMW). The Mitochondrial intermembrane segment spans residues 35–40 (FHFNSM). Residues 41–66 (YLLMLGLTTNTLTMYQWWRDIVREST) form a helical membrane-spanning segment. Topologically, residues 67–72 (FQGHHT) are mitochondrial matrix. The chain crosses the membrane as a helical span at residues 73-105 (PIVQKGLRYGMILFIVSEVFFFAGFFWAFYHSS). Residues 106–128 (LAPTPELGGCWPPTGITPLNPME) are Mitochondrial intermembrane-facing. The helical transmembrane segment at 129–152 (VPLLNTSVLLASGVSITWAHHSLM) threads the bilayer. Residues 153–155 (EGN) are Mitochondrial matrix-facing. The chain crosses the membrane as a helical span at residues 156–183 (RKHMLQALFITISLGIYFTLLQASEYYE). Topologically, residues 184–190 (TPFTISD) are mitochondrial intermembrane. Residues 191 to 223 (GIYGSTFFMATGFHGLHVIIGSTFLIVCFVRQL) traverse the membrane as a helical segment. The Mitochondrial matrix portion of the chain corresponds to 224 to 232 (KFHFTSNHH). A helical transmembrane segment spans residues 233-256 (FGFEAAAWYWHFVDVVWLFLYVSI). Over 257-261 (YWWGS) the chain is Mitochondrial intermembrane.

Belongs to the cytochrome c oxidase subunit 3 family. Component of the cytochrome c oxidase (complex IV, CIV), a multisubunit enzyme composed of 14 subunits. The complex is composed of a catalytic core of 3 subunits MT-CO1, MT-CO2 and MT-CO3, encoded in the mitochondrial DNA, and 11 supernumerary subunits COX4I, COX5A, COX5B, COX6A, COX6B, COX6C, COX7A, COX7B, COX7C, COX8 and NDUFA4, which are encoded in the nuclear genome. The complex exists as a monomer or a dimer and forms supercomplexes (SCs) in the inner mitochondrial membrane with NADH-ubiquinone oxidoreductase (complex I, CI) and ubiquinol-cytochrome c oxidoreductase (cytochrome b-c1 complex, complex III, CIII), resulting in different assemblies (supercomplex SCI(1)III(2)IV(1) and megacomplex MCI(2)III(2)IV(2)).

It is found in the mitochondrion inner membrane. It catalyses the reaction 4 Fe(II)-[cytochrome c] + O2 + 8 H(+)(in) = 4 Fe(III)-[cytochrome c] + 2 H2O + 4 H(+)(out). Functionally, component of the cytochrome c oxidase, the last enzyme in the mitochondrial electron transport chain which drives oxidative phosphorylation. The respiratory chain contains 3 multisubunit complexes succinate dehydrogenase (complex II, CII), ubiquinol-cytochrome c oxidoreductase (cytochrome b-c1 complex, complex III, CIII) and cytochrome c oxidase (complex IV, CIV), that cooperate to transfer electrons derived from NADH and succinate to molecular oxygen, creating an electrochemical gradient over the inner membrane that drives transmembrane transport and the ATP synthase. Cytochrome c oxidase is the component of the respiratory chain that catalyzes the reduction of oxygen to water. Electrons originating from reduced cytochrome c in the intermembrane space (IMS) are transferred via the dinuclear copper A center (CU(A)) of subunit 2 and heme A of subunit 1 to the active site in subunit 1, a binuclear center (BNC) formed by heme A3 and copper B (CU(B)). The BNC reduces molecular oxygen to 2 water molecules using 4 electrons from cytochrome c in the IMS and 4 protons from the mitochondrial matrix. This Phoca vitulina (Harbor seal) protein is Cytochrome c oxidase subunit 3 (MT-CO3).